Reading from the N-terminus, the 564-residue chain is Potassium-transporting ATPase potassium-binding subunit (564 aa).

Helical transmembrane passes span 7–27 (LLIL…GRFF), 67–87 (AWAL…MLML), 135–155 (VGLT…LVAL), 179–199 (LYAL…QGVP), 258–278 (FELV…GHYV), 286–306 (AILG…LWAE), 382–402 (VGLN…GLMI), 420–440 (LLVA…AIAA), 487–507 (LMLS…VLAL), and 528–548 (GLLF…LTFL).

This sequence belongs to the KdpA family. As to quaternary structure, the system is composed of three essential subunits: KdpA, KdpB and KdpC.

It is found in the cell inner membrane. Part of the high-affinity ATP-driven potassium transport (or Kdp) system, which catalyzes the hydrolysis of ATP coupled with the electrogenic transport of potassium into the cytoplasm. This subunit binds the periplasmic potassium ions and delivers the ions to the membrane domain of KdpB through an intramembrane tunnel. The chain is Potassium-transporting ATPase potassium-binding subunit from Pseudomonas syringae pv. tomato (strain ATCC BAA-871 / DC3000).